The primary structure comprises 284 residues: Phosphatidylserine decarboxylase proenzyme (284 aa).

Catalysis depends on charge relay system; for autoendoproteolytic cleavage activity residues Asp88, His145, and Ser248. Ser248 (schiff-base intermediate with substrate; via pyruvic acid; for decarboxylase activity) is an active-site residue. A Pyruvic acid (Ser); by autocatalysis modification is found at Ser248.

This sequence belongs to the phosphatidylserine decarboxylase family. PSD-B subfamily. Prokaryotic type I sub-subfamily. Heterodimer of a large membrane-associated beta subunit and a small pyruvoyl-containing alpha subunit. Pyruvate is required as a cofactor. Post-translationally, is synthesized initially as an inactive proenzyme. Formation of the active enzyme involves a self-maturation process in which the active site pyruvoyl group is generated from an internal serine residue via an autocatalytic post-translational modification. Two non-identical subunits are generated from the proenzyme in this reaction, and the pyruvate is formed at the N-terminus of the alpha chain, which is derived from the carboxyl end of the proenzyme. The autoendoproteolytic cleavage occurs by a canonical serine protease mechanism, in which the side chain hydroxyl group of the serine supplies its oxygen atom to form the C-terminus of the beta chain, while the remainder of the serine residue undergoes an oxidative deamination to produce ammonia and the pyruvoyl prosthetic group on the alpha chain. During this reaction, the Ser that is part of the protease active site of the proenzyme becomes the pyruvoyl prosthetic group, which constitutes an essential element of the active site of the mature decarboxylase.

It is found in the cell membrane. It carries out the reaction a 1,2-diacyl-sn-glycero-3-phospho-L-serine + H(+) = a 1,2-diacyl-sn-glycero-3-phosphoethanolamine + CO2. The protein operates within phospholipid metabolism; phosphatidylethanolamine biosynthesis; phosphatidylethanolamine from CDP-diacylglycerol: step 2/2. Catalyzes the formation of phosphatidylethanolamine (PtdEtn) from phosphatidylserine (PtdSer). The polypeptide is Phosphatidylserine decarboxylase proenzyme (Albidiferax ferrireducens (strain ATCC BAA-621 / DSM 15236 / T118) (Rhodoferax ferrireducens)).